A 236-amino-acid polypeptide reads, in one-letter code: uncharacterized protein (236 aa).

A run of 7 helical transmembrane segments spans residues 32-52, 61-81, 90-110, 115-135, 144-164, 167-187, and 208-228; these read MALALLLTGVAAITTISVEPI, FGTIIMFAPLGIALYFFMGFG, ILFWVYAGLTGMSLSYLALIY, IARTFFICSSVFGAMSLYGYS, GSFFAMGLIGLIIASLVNLFL, SSLSFATSLIGIVVFMGLIAW, and LSIMAAFTLYLDFINLFLYLM.

Belongs to the BI1 family.

It localises to the cell membrane. This is an uncharacterized protein from Rickettsia prowazekii (strain Madrid E).